We begin with the raw amino-acid sequence, 585 residues long: Packaging protein UL32 (585 aa).

Residues 1–25 (MDRVESEEPMDGFESPVFSENTSSN) form a disordered region. Zn(2+)-binding residues include cysteine 107, cysteine 110, histidine 187, cysteine 193, cysteine 408, cysteine 411, histidine 484, and cysteine 491. Zinc finger stretches follow at residues 107-193 (CLVC…LHVC) and 408-491 (CMLC…DLLC).

The protein belongs to the herpesviridae UL32 protein family.

It localises to the host cytoplasm. Its subcellular location is the host nucleus. Plays a role in efficient localization of neo-synthesized capsids to nuclear replication compartments, thereby controlling cleavage and packaging of virus genomic DNA. This chain is Packaging protein UL32 (26), found in Varicella-zoster virus (strain Dumas) (HHV-3).